The primary structure comprises 360 residues: Ubiquitin carboxyl-terminal hydrolase MIY1 (360 aa).

Cysteine 28 (nucleophile) is an active-site residue. The active-site Proton acceptor is the histidine 216. The segment at 317–360 (KRKIHSHKKNSEIHAPVKKDKFKRRSSLLNAKASEKEKSECVVM) is disordered. 2 stretches are compositionally biased toward basic and acidic residues: residues 325–335 (KNSEIHAPVKK) and 349–360 (ASEKEKSECVVM).

It belongs to the MINDY deubiquitinase family. FAM63 subfamily.

Its subcellular location is the cytoplasm. The catalysed reaction is Thiol-dependent hydrolysis of ester, thioester, amide, peptide and isopeptide bonds formed by the C-terminal Gly of ubiquitin (a 76-residue protein attached to proteins as an intracellular targeting signal).. Its function is as follows. Hydrolase that can specifically remove 'Lys-48'-linked conjugated ubiquitin from proteins. Has endodeubiquitinase activity. The chain is Ubiquitin carboxyl-terminal hydrolase MIY1 from Saccharomyces cerevisiae (strain ATCC 204508 / S288c) (Baker's yeast).